The chain runs to 162 residues: ATP synthase subunit delta, mitochondrial (162 aa).

A mitochondrion-targeting transit peptide spans 1–25 (MSSLRLLASAARRATTHVAYTRRGY).

It belongs to the ATPase epsilon chain family. In terms of assembly, F-type ATPases have 2 components, CF(1) - the catalytic core - and CF(0) - the membrane proton channel. CF(1) has five subunits: alpha(3), beta(3), gamma(1), delta(1), epsilon(1). CF(0) has three main subunits: a, b and c.

The protein localises to the mitochondrion. The protein resides in the mitochondrion inner membrane. Functionally, mitochondrial membrane ATP synthase (F(1)F(0) ATP synthase or Complex V) produces ATP from ADP in the presence of a proton gradient across the membrane which is generated by electron transport complexes of the respiratory chain. F-type ATPases consist of two structural domains, F(1) - containing the extramembraneous catalytic core, and F(0) - containing the membrane proton channel, linked together by a central stalk and a peripheral stalk. During catalysis, ATP turnover in the catalytic domain of F(1) is coupled via a rotary mechanism of the central stalk subunits to proton translocation. Part of the complex F(1) domain and of the central stalk which is part of the complex rotary element. Rotation of the central stalk against the surrounding alpha(3)beta(3) subunits leads to hydrolysis of ATP in three separate catalytic sites on the beta subunits. The chain is ATP synthase subunit delta, mitochondrial (atpD) from Agaricus bisporus (White button mushroom).